We begin with the raw amino-acid sequence, 199 residues long: Putative pseudouridine methyltransferase (199 aa).

2 residues coordinate S-adenosyl-L-methionine: Leu132 and Cys186.

It belongs to the methyltransferase superfamily. TrmY family.

It localises to the cytoplasm. In Vibrio parahaemolyticus serotype O3:K6 (strain RIMD 2210633), this protein is Putative pseudouridine methyltransferase.